Reading from the N-terminus, the 104-residue chain is L-rhamnose mutarotase (104 aa).

Y18 lines the substrate pocket. Residue H22 is the Proton donor of the active site. Substrate is bound by residues Y41 and 76-77 (WW).

The protein belongs to the rhamnose mutarotase family. In terms of assembly, homodimer.

The protein resides in the cytoplasm. It catalyses the reaction alpha-L-rhamnose = beta-L-rhamnose. The protein operates within carbohydrate metabolism; L-rhamnose metabolism. Functionally, involved in the anomeric conversion of L-rhamnose. This is L-rhamnose mutarotase from Salmonella dublin (strain CT_02021853).